A 467-amino-acid polypeptide reads, in one-letter code: ATP synthase subunit beta (467 aa).

156-163 is a binding site for ATP; sequence GGAGVGKT.

Belongs to the ATPase alpha/beta chains family. As to quaternary structure, F-type ATPases have 2 components, CF(1) - the catalytic core - and CF(0) - the membrane proton channel. CF(1) has five subunits: alpha(3), beta(3), gamma(1), delta(1), epsilon(1). CF(0) has three main subunits: a(1), b(2) and c(9-12). The alpha and beta chains form an alternating ring which encloses part of the gamma chain. CF(1) is attached to CF(0) by a central stalk formed by the gamma and epsilon chains, while a peripheral stalk is formed by the delta and b chains.

The protein resides in the cell inner membrane. The catalysed reaction is ATP + H2O + 4 H(+)(in) = ADP + phosphate + 5 H(+)(out). In terms of biological role, produces ATP from ADP in the presence of a proton gradient across the membrane. The catalytic sites are hosted primarily by the beta subunits. This is ATP synthase subunit beta from Cupriavidus taiwanensis (strain DSM 17343 / BCRC 17206 / CCUG 44338 / CIP 107171 / LMG 19424 / R1) (Ralstonia taiwanensis (strain LMG 19424)).